The following is a 355-amino-acid chain: Guanine nucleotide-binding protein G(i) subunit alpha-2 (355 aa).

The N-myristoyl glycine moiety is linked to residue G2. The S-palmitoyl cysteine moiety is linked to residue C3. Positions 32-355 constitute a G-alpha domain; sequence REVKLLLLGA…KNNLKDCGLF (324 aa). Positions 35-48 are G1 motif; that stretch reads KLLLLGAGESGKST. GTP contacts are provided by residues 40–47, 176–182, 201–205, 270–273, and A327; these read GAGESGKS, LRTRVKT, DVGGQ, and NKKD. Mg(2+) is bound by residues S47 and T182. Residues 174-182 form a G2 motif region; sequence DVLRTRVKT. The tract at residues 197–206 is G3 motif; the sequence is FKMFDVGGQR. The G4 motif stretch occupies residues 266 to 273; that stretch reads ILFLNKKD. Residues 325-330 form a G5 motif region; the sequence is TCATDT.

The protein belongs to the G-alpha family. G(i/o/t/z) subfamily. In terms of assembly, g proteins are composed of 3 units; alpha, beta and gamma. The alpha chain contains the guanine nucleotide binding site.

Its subcellular location is the cytoplasm. The protein resides in the cytoskeleton. It localises to the microtubule organizing center. It is found in the centrosome. The protein localises to the cell membrane. In terms of biological role, guanine nucleotide-binding proteins (G proteins) are involved as modulators or transducers in various transmembrane signaling systems. The G(i) proteins are involved in hormonal regulation of adenylate cyclase: they inhibit the cyclase in response to beta-adrenergic stimuli. May play a role in cell division. In Gallus gallus (Chicken), this protein is Guanine nucleotide-binding protein G(i) subunit alpha-2 (GNAI2).